We begin with the raw amino-acid sequence, 147 residues long: UPF0735 ACT domain-containing protein BH1214 (147 aa).

An ACT domain is found at 70-145; the sequence is TLSINLEDRS…AVEKVELVGS (76 aa).

Belongs to the UPF0735 family.

The sequence is that of UPF0735 ACT domain-containing protein BH1214 from Halalkalibacterium halodurans (strain ATCC BAA-125 / DSM 18197 / FERM 7344 / JCM 9153 / C-125) (Bacillus halodurans).